A 118-amino-acid chain; its full sequence is Peptidyl-prolyl cis-trans isomerase Pin1 (118 aa).

Disordered regions lie at residues 1–37 (MSSE…ATTR) and 61–84 (LASR…GRGQ). Positions 3-118 (SEKVRASHIL…SGVHIIKRTG (116 aa)) constitute a PpiC domain. Basic residues predominate over residues 12 to 22 (LIKHQGSRRKS).

Belongs to the PpiC/parvulin rotamase family. Post-translationally, the N-terminus is blocked. In terms of tissue distribution, expressed in roots, stems, leaves, flowers and seedlings.

Its subcellular location is the cytoplasm. It is found in the nucleus. The catalysed reaction is [protein]-peptidylproline (omega=180) = [protein]-peptidylproline (omega=0). Its activity is regulated as follows. Inhibited in vitro by juglone. Its function is as follows. Prolyl cis/trans isomerase with specificity for phospho-Ser-Pro bonds. The chain is Peptidyl-prolyl cis-trans isomerase Pin1 (PARV12.8) from Digitalis lanata (Grecian foxglove).